The chain runs to 312 residues: Porphobilinogen deaminase (312 aa).

Position 243 is an S-(dipyrrolylmethanemethyl)cysteine (cysteine 243).

Belongs to the HMBS family. Monomer. Dipyrromethane is required as a cofactor.

The enzyme catalyses 4 porphobilinogen + H2O = hydroxymethylbilane + 4 NH4(+). The protein operates within porphyrin-containing compound metabolism; protoporphyrin-IX biosynthesis; coproporphyrinogen-III from 5-aminolevulinate: step 2/4. Functionally, tetrapolymerization of the monopyrrole PBG into the hydroxymethylbilane pre-uroporphyrinogen in several discrete steps. In Vibrio parahaemolyticus serotype O3:K6 (strain RIMD 2210633), this protein is Porphobilinogen deaminase.